The chain runs to 283 residues: Large ribosomal subunit protein uL4 (283 aa).

Belongs to the universal ribosomal protein uL4 family. Part of the 50S ribosomal subunit.

In terms of biological role, one of the primary rRNA binding proteins, this protein initially binds near the 5'-end of the 23S rRNA. It is important during the early stages of 50S assembly. It makes multiple contacts with different domains of the 23S rRNA in the assembled 50S subunit and ribosome. Forms part of the polypeptide exit tunnel. This chain is Large ribosomal subunit protein uL4, found in Pyrobaculum aerophilum (strain ATCC 51768 / DSM 7523 / JCM 9630 / CIP 104966 / NBRC 100827 / IM2).